The sequence spans 90 residues: Probable Fe(2+)-trafficking protein (90 aa).

It belongs to the Fe(2+)-trafficking protein family.

Its function is as follows. Could be a mediator in iron transactions between iron acquisition and iron-requiring processes, such as synthesis and/or repair of Fe-S clusters in biosynthetic enzymes. The protein is Probable Fe(2+)-trafficking protein of Pseudoalteromonas translucida (strain TAC 125).